Here is a 632-residue protein sequence, read N- to C-terminus: Biosynthetic arginine decarboxylase (632 aa).

Lys-101 is modified (N6-(pyridoxal phosphate)lysine). 281–291 (FDVGGGLGVDY) contacts substrate.

The protein belongs to the Orn/Lys/Arg decarboxylase class-II family. SpeA subfamily. Requires Mg(2+) as cofactor. Pyridoxal 5'-phosphate is required as a cofactor.

The enzyme catalyses L-arginine + H(+) = agmatine + CO2. It functions in the pathway amine and polyamine biosynthesis; agmatine biosynthesis; agmatine from L-arginine: step 1/1. Catalyzes the biosynthesis of agmatine from arginine. The chain is Biosynthetic arginine decarboxylase from Salmonella dublin (strain CT_02021853).